The following is a 37-amino-acid chain: Omega-conotoxin-like S6.7 (37 aa).

Residues 1 to 4 (KSTS) constitute a propeptide that is removed on maturation. 3 cysteine pairs are disulfide-bonded: C5–C20, C12–C23, and C19–C32.

It belongs to the conotoxin O1 superfamily. Expressed by the venom duct.

The protein resides in the secreted. In terms of biological role, omega-conotoxins act at presynaptic membranes, they bind and block voltage-gated calcium channels (Cav). This toxin blocks N-, P- and Q-type calcium channels. The protein is Omega-conotoxin-like S6.7 of Conus striatus (Striated cone).